A 63-amino-acid polypeptide reads, in one-letter code: Beta-toxin NaTx36 (63 aa).

The 62-residue stretch at 1–62 (KDGYPMRSDG…VYDSATSKCR (62 aa)) folds into the LCN-type CS-alpha/beta domain. Cystine bridges form between Cys11–Cys61, Cys15–Cys36, Cys22–Cys43, and Cys26–Cys45.

Belongs to the long (4 C-C) scorpion toxin superfamily. Sodium channel inhibitor family. Beta subfamily. Expressed by the venom gland.

The protein resides in the secreted. Functionally, beta toxins bind sodium channels (Nav) and shift the voltage of activation towards more negative potentials thereby affecting sodium channel activation and promoting spontaneous and repetitive firing. Only when tested on grasshopper mouse channels, this toxin inhibits Nav1.8/SCN10A sodium currents in a concentration and voltage-dependent manner (IC(50)=680 nM). This toxin hyperpolarizes the voltage dependence of Nav1.8/SCN10A activation, as well as steady-state fast inactivation and slow inactivation. In contrast to most beta scorpion toxins, this toxin inhibits grasshopper mouse Nav1.8/SCN10A currents through modulation of the domain I S4 voltage sensor, and the domain II second S5-S6 extracellular pore loop. The polypeptide is Beta-toxin NaTx36 (Centruroides sculpturatus (Arizona bark scorpion)).